Consider the following 722-residue polypeptide: Transcription factor kayak, isoforms D/sro (722 aa).

Low complexity predominate over residues 173–188 (QHQTQQQHQSQQQQQH). 3 disordered regions span residues 173-193 (QHQTQQQHQSQQQQQHQRQDY), 283-317 (LGQGSESEDSNASYNDTQMNEEQDTTDTSSAHTDS), and 350-407 (GSAS…KRRV). Over residues 283–300 (LGQGSESEDSNASYNDTQ) the composition is skewed to polar residues. Composition is skewed to low complexity over residues 308-317 (TDTSSAHTDS) and 350-364 (GSASVGSSNANTSNT). The bZIP domain occupies 385-448 (EQKRAVRRER…NQLEYLLATH (64 aa)). The interval 387 to 406 (KRAVRRERNKQAAARCRKRR) is basic motif. A leucine-zipper region spans residues 413 to 420 (LTEEVEQL). The segment covering 477–498 (AGSSGSGASSHHNHNSNDSSNG) has biased composition (low complexity). 2 disordered regions span residues 477-519 (AGSS…PLDL) and 683-722 (DGGTGLTPVSGPLVPNSSSTNKHPLELPTPTAEPSKLVSL). Positions 506-516 (TLNSTGRSNSP) are enriched in polar residues. At Ser-515 the chain carries Phosphoserine.

This sequence belongs to the bZIP family. Fos subfamily. As to quaternary structure, homodimer. Heterodimer with Jra. The kay-Jra heterodimer binds more stably to the AP-1 site than either of the two proteins alone.

The protein resides in the nucleus. Functionally, developmentally regulated transcription factor AP-1 binds and recognizes the enhancer DNA sequence: 5'-TGA[CG]TCA-3'. May play a role in the function or determination of a particular subset of cells in the developing embryo. It is able to carry out its function either independently of or in conjunction with Jra. This chain is Transcription factor kayak, isoforms D/sro, found in Drosophila melanogaster (Fruit fly).